The primary structure comprises 470 residues: MRLWTLGTSIFLRLWGTYVFPRSPSWLDFIQHLGVCCFVAFLSVSLFSAAFYWILPPVALLSSVWMITCVFLCCSKRARCFILLAVLSCGLREGRNALIAAGTGVVIFGHVENIFYNFRGLLDSMTCNLRAKSFSVHFPLLKRYTEAIQWIYGLATPLNLFDDLVSWNQTLVVSLFSPSHALEAHMNDTRGEVLGVLHHMVVTTELLTSVGQKLLALAGLLLILVSTGLFLKRFLGPCGWKYENVYITKQFVRFDEKERHQQRPCVLPLNKKERKKYVIVPSLQLTPKEKKTLGLFFLPVLTYLYMWVLFAAVDYLLYRLISSMNKQFQSLPGLEVHLKLRGEKQGTQGVVHDSAFNISMFEPSCIPKPRLSVSETWVPLSIILLTLIILGLLSSMLMQLKILVSVSFYPKVERERIEYLHAKLLEKRSKQPLREADGKPSLYFKKIHFWFPVLKMIRKKQTIPANEDDL.

The Cytoplasmic portion of the chain corresponds to 1–33 (MRLWTLGTSIFLRLWGTYVFPRSPSWLDFIQHL). The helical transmembrane segment at 34 to 54 (GVCCFVAFLSVSLFSAAFYWI) threads the bilayer. A topological domain (extracellular) is located at residue Leu55. Residues 56–76 (PPVALLSSVWMITCVFLCCSK) form a helical membrane-spanning segment. Residues 77–97 (RARCFILLAVLSCGLREGRNA) lie on the Cytoplasmic side of the membrane. Residues 98–118 (LIAAGTGVVIFGHVENIFYNF) traverse the membrane as a helical segment. Over 119 to 209 (RGLLDSMTCN…MVVTTELLTS (91 aa)) the chain is Extracellular. A helical transmembrane segment spans residues 210–230 (VGQKLLALAGLLLILVSTGLF). Over 231-292 (LKRFLGPCGW…LQLTPKEKKT (62 aa)) the chain is Cytoplasmic. The chain crosses the membrane as a helical span at residues 293–313 (LGLFFLPVLTYLYMWVLFAAV). Residues 314–376 (DYLLYRLISS…PKPRLSVSET (63 aa)) are Extracellular-facing. Residues 377–397 (WVPLSIILLTLIILGLLSSML) form a helical membrane-spanning segment. Over 398–470 (MQLKILVSVS…QTIPANEDDL (73 aa)) the chain is Cytoplasmic.

Interacts with CREB3. Monomer. Homodimer. Isoform 1 interacts (via the C-terminus cytoplasmic tail) with OS9 isoform 1 (via the C-terminus tail); the interaction induces DCSTAMP redistribution to the endoplasmic reticulum-Golgi intermediate compartment. Isoform 1 interacts (via the C-terminus cytoplasmic tail) with OS9 isoform 2 (via the C-terminus tail). Glycosylated. As to expression, expressed in macrophages and bone marrow dendritic cells (BM-DC). Weakly expressed in the spleen and lymph node. Highly expressed in multi-nuclear osteoclasts compared to mono-nuclear macrophages. Expressed in foreign body giant cells (FBGCs). Isoform 1 and isoform 2 are expressed in osteoclasts.

Its subcellular location is the cell membrane. The protein localises to the endoplasmic reticulum membrane. It localises to the endoplasmic reticulum-Golgi intermediate compartment membrane. It is found in the endosome. Its function is as follows. Probable cell surface receptor that plays several roles in cellular fusion, cell differentiation, bone and immune homeostasis. Plays a role in TNFSF11-mediated osteoclastogenesis. Cooperates with OCSTAMP in modulating cell-cell fusion in both osteoclasts and foreign body giant cells (FBGCs). Participates in osteoclast bone resorption. Involved in inducing the expression of tartrate-resistant acid phosphatase in osteoclast precursors. Plays a role in haematopoietic stem cell differentiation of bone marrow cells toward the myeloid lineage. Inhibits the development of neutrophilic granulocytes. Plays also a role in the regulation of dendritic cell (DC) antigen presentation activity by controlling phagocytic activity. Involved in the maintenance of immune self-tolerance and avoidance of autoimmune reactions. The polypeptide is Dendritic cell-specific transmembrane protein (Dcstamp) (Mus musculus (Mouse)).